The primary structure comprises 399 residues: Acetate kinase (399 aa).

Asn10 contacts Mg(2+). Lys17 contributes to the ATP binding site. Position 91 (Arg91) interacts with substrate. Asp148 acts as the Proton donor/acceptor in catalysis. ATP-binding positions include 208–212, 283–285, and 331–335; these read HLGNG, DCR, and GIGEN. Glu385 contacts Mg(2+).

Belongs to the acetokinase family. In terms of assembly, homodimer. The cofactor is Mg(2+). Mn(2+) serves as cofactor.

The protein localises to the cytoplasm. The enzyme catalyses acetate + ATP = acetyl phosphate + ADP. It participates in metabolic intermediate biosynthesis; acetyl-CoA biosynthesis; acetyl-CoA from acetate: step 1/2. Catalyzes the formation of acetyl phosphate from acetate and ATP. Can also catalyze the reverse reaction. The polypeptide is Acetate kinase (Shewanella oneidensis (strain ATCC 700550 / JCM 31522 / CIP 106686 / LMG 19005 / NCIMB 14063 / MR-1)).